A 203-amino-acid chain; its full sequence is Pyridoxine/pyridoxamine 5'-phosphate oxidase (203 aa).

Residues 50 to 55, 65 to 66, lysine 72, and glutamine 94 each bind FMN; these read RMVLLK and YT. A substrate-binding site is contributed by lysine 55. Residues tyrosine 112, arginine 116, and serine 120 each coordinate substrate. Residues 129-130 and tryptophan 174 each bind FMN; that span reads QS. 180-182 is a binding site for substrate; it reads RLH. Arginine 184 is an FMN binding site.

This sequence belongs to the pyridoxamine 5'-phosphate oxidase family. In terms of assembly, homodimer. FMN is required as a cofactor.

The enzyme catalyses pyridoxamine 5'-phosphate + O2 + H2O = pyridoxal 5'-phosphate + H2O2 + NH4(+). It catalyses the reaction pyridoxine 5'-phosphate + O2 = pyridoxal 5'-phosphate + H2O2. Its pathway is cofactor metabolism; pyridoxal 5'-phosphate salvage; pyridoxal 5'-phosphate from pyridoxamine 5'-phosphate: step 1/1. It participates in cofactor metabolism; pyridoxal 5'-phosphate salvage; pyridoxal 5'-phosphate from pyridoxine 5'-phosphate: step 1/1. In terms of biological role, catalyzes the oxidation of either pyridoxine 5'-phosphate (PNP) or pyridoxamine 5'-phosphate (PMP) into pyridoxal 5'-phosphate (PLP). In Brucella anthropi (strain ATCC 49188 / DSM 6882 / CCUG 24695 / JCM 21032 / LMG 3331 / NBRC 15819 / NCTC 12168 / Alc 37) (Ochrobactrum anthropi), this protein is Pyridoxine/pyridoxamine 5'-phosphate oxidase.